Consider the following 624-residue polypeptide: Leucine-rich repeat and IQ domain-containing protein 3 (624 aa).

LRR repeat units follow at residues 51–72 (SLRV…QSCI), 73–94 (KLIK…KFWN), and 98–119 (NLKL…CVLS). The region spanning 132–179 (CPVSLKKGYRHVLVNSIWPLKALDHHVISDEEIIQNWHLPERFKACNH) is the LRRCT domain. Positions 215-244 (HNSPVLIVQRWIRGFLVRKNLSPVFFHKKK) constitute an IQ domain. A coiled-coil region spans residues 553–614 (KQKLKAEKYR…TKVAIVKTNL (62 aa)).

The polypeptide is Leucine-rich repeat and IQ domain-containing protein 3 (LRRIQ3) (Homo sapiens (Human)).